The chain runs to 342 residues: MQAALHELHAALGGELLGDPSLVIRRIGPLASADAETISFVSNARYRAQLAQTAAACVIVAPALAEDAAQRGAAIVTPDPYHYFARLTQWWAARLRVAPPSGVHPSAVVAADVRLGEGVSVGPLTVIEAGAVLGDGVVIASQCHIGAGVQIGAQTRLAPHVTLMPGTRLGQRCLLHGGVVIGADGFGFAPHQGRWEKIEQLGGVVVGDDVEIGANTCIDRGALDDTVIGEGVKLDNLIQIGHNVQIGAHSAMAGCAGVAGSARIGRGCTVGGGAIVLGHLELADGVHISAASVVMRSIKQPGQYSGVFPIDDNASWEKNAATLRQLHTLRDRLRTLEKKSSP.

H242 (proton acceptor) is an active-site residue.

Belongs to the transferase hexapeptide repeat family. LpxD subfamily. In terms of assembly, homotrimer.

It catalyses the reaction a UDP-3-O-[(3R)-3-hydroxyacyl]-alpha-D-glucosamine + a (3R)-hydroxyacyl-[ACP] = a UDP-2-N,3-O-bis[(3R)-3-hydroxyacyl]-alpha-D-glucosamine + holo-[ACP] + H(+). It participates in bacterial outer membrane biogenesis; LPS lipid A biosynthesis. Its function is as follows. Catalyzes the N-acylation of UDP-3-O-acylglucosamine using 3-hydroxyacyl-ACP as the acyl donor. Is involved in the biosynthesis of lipid A, a phosphorylated glycolipid that anchors the lipopolysaccharide to the outer membrane of the cell. This is UDP-3-O-acylglucosamine N-acyltransferase from Leptothrix cholodnii (strain ATCC 51168 / LMG 8142 / SP-6) (Leptothrix discophora (strain SP-6)).